A 428-amino-acid polypeptide reads, in one-letter code: Histidine--tRNA ligase (428 aa).

Belongs to the class-II aminoacyl-tRNA synthetase family. In terms of assembly, homodimer.

It is found in the cytoplasm. The enzyme catalyses tRNA(His) + L-histidine + ATP = L-histidyl-tRNA(His) + AMP + diphosphate + H(+). The polypeptide is Histidine--tRNA ligase (Thermosynechococcus vestitus (strain NIES-2133 / IAM M-273 / BP-1)).